Here is a 195-residue protein sequence, read N- to C-terminus: Imidazole glycerol phosphate synthase subunit HisH 2 (195 aa).

The region spanning 2 to 195 (KIIIIDTACA…LISNFIKDIG (194 aa)) is the Glutamine amidotransferase type-1 domain. The Nucleophile role is filled by Cys77. Active-site residues include His175 and Glu177.

Heterodimer of HisH and HisF.

The protein localises to the cytoplasm. The enzyme catalyses 5-[(5-phospho-1-deoxy-D-ribulos-1-ylimino)methylamino]-1-(5-phospho-beta-D-ribosyl)imidazole-4-carboxamide + L-glutamine = D-erythro-1-(imidazol-4-yl)glycerol 3-phosphate + 5-amino-1-(5-phospho-beta-D-ribosyl)imidazole-4-carboxamide + L-glutamate + H(+). The catalysed reaction is L-glutamine + H2O = L-glutamate + NH4(+). Its pathway is amino-acid biosynthesis; L-histidine biosynthesis; L-histidine from 5-phospho-alpha-D-ribose 1-diphosphate: step 5/9. IGPS catalyzes the conversion of PRFAR and glutamine to IGP, AICAR and glutamate. The HisH subunit provides the glutamine amidotransferase activity that produces the ammonia necessary to HisF for the synthesis of IGP and AICAR. This is Imidazole glycerol phosphate synthase subunit HisH 2 (hisH2) from Campylobacter jejuni subsp. jejuni serotype O:2 (strain ATCC 700819 / NCTC 11168).